A 451-amino-acid polypeptide reads, in one-letter code: uncharacterized protein (451 aa).

A TRAM domain is found at V2–T60. [4Fe-4S] cluster-binding residues include C73, C79, C82, and C162. Residues Q283, Y312, D333, and D381 each contribute to the S-adenosyl-L-methionine site. Residue C408 is the Nucleophile of the active site.

Belongs to the class I-like SAM-binding methyltransferase superfamily. RNA M5U methyltransferase family.

This is an uncharacterized protein from Streptococcus pyogenes serotype M3 (strain ATCC BAA-595 / MGAS315).